Reading from the N-terminus, the 236-residue chain is uncharacterized protein (236 aa).

It to E.coli YfjP and YkfA.

This is an uncharacterized protein from Escherichia coli (strain K12).